The following is a 441-amino-acid chain: Acetyltransferase TRI7 (441 aa).

Transmembrane regions (helical) follow at residues 14–34, 75–95, 158–178, 306–326, 336–356, 377–397, and 421–441; these read GILY…LIII, SLTL…LVLT, IWFI…LDII, IAFV…FCWG, LAFF…QALC, LVGY…YLYH, and TATM…GIEV.

It belongs to the wax synthase family.

Its subcellular location is the membrane. It participates in sesquiterpene biosynthesis; trichothecene biosynthesis. In terms of biological role, acetyltransferase; part of the core gene cluster that mediates the biosynthesis of trichothecenes, a very large family of chemically related bicyclic sesquiterpene compounds acting as mycotoxins, including T2-toxin. The biosynthesis of trichothecenes begins with the cyclization of farnesyl diphosphate to trichodiene and is catalyzed by the trichodiene synthase TRI5. Trichodiene undergoes a series of oxygenations catalyzed by the cytochrome P450 monooxygenase TRI4. TRI4 controls the addition of four oxygens at C-2, C-3, C-11, and the C-12, C-13-epoxide to form the intermediate isotrichotriol. Isotrichotriol then undergoes a non-enzymatic isomerization and cyclization to form isotrichodermol. During this process, the oxygen at the C-2 position becomes the pyran ring oxygen and the hydroxyl group at C-11 is lost. More complex type A trichothecenes are built by modifying isotrichodermol through a series of paired hydroxylation and acetylation or acylation steps. Isotrichodermol is converted to isotrichodermin by the acetyltransferase TRI101. TRI101 encodes a C-3 transacetylase that acts as a self-protection or resistance factor during biosynthesis and that the presence of a free C-3 hydroxyl group is a key component of Fusarium trichothecene phytotoxicity. A second hydroxyl group is added to C-15 by the trichothecene C-15 hydroxylase TRI11, producing 15-decalonectrin, which is then acetylated by TRI3, producing calonectrin. A third hydroxyl group is added at C-4 by the cytochrome P450 monooxygenase TRI13, converting calonectrin to 3,15-diacetoxyspirpenol, which is subsequently acetylated by the acetyltransferase TRI7. A fourth hydroxyl group is added to C-8 by the cytochrome P450 monooxygenase TRI1, followed by the addition of an isovaleryl moiety by TRI16. Finally, the acetyl group is removed from the C-3 position by the trichothecene C-3 esterase TRI8 to produce T-2 toxin. This chain is Acetyltransferase TRI7, found in Fusarium sporotrichioides.